The chain runs to 718 residues: Fatty acid oxidation complex subunit alpha (718 aa).

The interval 1 to 188 is enoyl-CoA hydratase/isomerase; the sequence is MIYQGESIRV…KVGAVDAVVE (188 aa). Substrate is bound at residue aspartate 295. Positions 310–718 are 3-hydroxyacyl-CoA dehydrogenase; sequence TKEIKTAGVL…KSYFDTTSAK (409 aa). NAD(+) is bound by residues methionine 324, aspartate 343, 400-402, lysine 407, and serine 429; that span reads VVE. The active-site For 3-hydroxyacyl-CoA dehydrogenase activity is the histidine 450. Asparagine 453 serves as a coordination point for NAD(+). Substrate contacts are provided by asparagine 500 and tyrosine 658.

It in the N-terminal section; belongs to the enoyl-CoA hydratase/isomerase family. This sequence in the C-terminal section; belongs to the 3-hydroxyacyl-CoA dehydrogenase family. In terms of assembly, heterotetramer of two alpha chains (FadB) and two beta chains (FadA).

The catalysed reaction is a (3S)-3-hydroxyacyl-CoA + NAD(+) = a 3-oxoacyl-CoA + NADH + H(+). It catalyses the reaction a (3S)-3-hydroxyacyl-CoA = a (2E)-enoyl-CoA + H2O. It carries out the reaction a 4-saturated-(3S)-3-hydroxyacyl-CoA = a (3E)-enoyl-CoA + H2O. The enzyme catalyses (3S)-3-hydroxybutanoyl-CoA = (3R)-3-hydroxybutanoyl-CoA. The catalysed reaction is a (3Z)-enoyl-CoA = a 4-saturated (2E)-enoyl-CoA. It catalyses the reaction a (3E)-enoyl-CoA = a 4-saturated (2E)-enoyl-CoA. It participates in lipid metabolism; fatty acid beta-oxidation. In terms of biological role, involved in the aerobic and anaerobic degradation of long-chain fatty acids via beta-oxidation cycle. Catalyzes the formation of 3-oxoacyl-CoA from enoyl-CoA via L-3-hydroxyacyl-CoA. It can also use D-3-hydroxyacyl-CoA and cis-3-enoyl-CoA as substrate. This Idiomarina loihiensis (strain ATCC BAA-735 / DSM 15497 / L2-TR) protein is Fatty acid oxidation complex subunit alpha.